Consider the following 833-residue polypeptide: Leucine--tRNA ligase (833 aa).

The 'HIGH' region motif lies at P41–H52. The 'KMSKS' region motif lies at K610–S614. ATP is bound at residue K613.

The protein belongs to the class-I aminoacyl-tRNA synthetase family.

The protein resides in the cytoplasm. It catalyses the reaction tRNA(Leu) + L-leucine + ATP = L-leucyl-tRNA(Leu) + AMP + diphosphate. The protein is Leucine--tRNA ligase of Streptococcus suis (strain 05ZYH33).